Reading from the N-terminus, the 187-residue chain is Cerebral dopamine neurotrophic factor (187 aa).

The first 24 residues, 1-24, serve as a signal peptide directing secretion; it reads MRCTSPAALVTFCAGLWISNHVLA. 3 disulfide bridges follow: Cys37-Cys124, Cys40-Cys113, and Cys71-Cys82.

The protein belongs to the ARMET family.

It localises to the secreted. Trophic factor for dopamine neurons. Prevents the 6-hydroxydopamine (6-OHDA)-induced degeneration of dopaminergic neurons. When administered after 6-OHDA-lesioning, restores the dopaminergic function and prevents the degeneration of dopaminergic neurons in substantia nigra. The sequence is that of Cerebral dopamine neurotrophic factor (Cdnf) from Rattus norvegicus (Rat).